A 376-amino-acid polypeptide reads, in one-letter code: MAFVPFQAPQGSTIAVGMSGGVDSSVTAYLLKKQGYDVFGIFMKNWEETFSSGYCSAAEDLEDARDVCQTLDIPLHTVNFVQQYHDRVFQLFLDEYRAGRTPNPDVLCNREIKFAELALYAQQLGADFLATGHYAQRLQSDNHEAALFKGVDAQKDQSYFLHQITPAQLNKAIFPLGGLQKKQVRAIARERGLTTFDKKDSTGICFIGERPFRAFLQQYLPAQKGLMKTPNGEIVGEHMGLMYYTIGQRQGLGIGGIAGASEEPWYVLEKDLSNNVLIVGQGDHPLLYHRVLIAGQLSWLNEAPIAGRFYHAKTRYRQSDQKCRVDYAADGRLQLTFEQLQRAITLGQYAVIYDGERCLGGGVIEARMQGKQDVSS.

ATP contacts are provided by residues 17-24 (GMSGGVDS) and Met-43. The segment at 103 to 105 (NPD) is interaction with target base in tRNA. Residue Cys-108 is the Nucleophile of the active site. A disulfide bridge connects residues Cys-108 and Cys-205. Gly-132 provides a ligand contact to ATP. The interval 155-157 (KDQ) is interaction with tRNA. The active-site Cysteine persulfide intermediate is the Cys-205. The interaction with tRNA stretch occupies residues 315 to 316 (RY).

This sequence belongs to the MnmA/TRMU family.

The protein localises to the cytoplasm. The catalysed reaction is S-sulfanyl-L-cysteinyl-[protein] + uridine(34) in tRNA + AH2 + ATP = 2-thiouridine(34) in tRNA + L-cysteinyl-[protein] + A + AMP + diphosphate + H(+). Functionally, catalyzes the 2-thiolation of uridine at the wobble position (U34) of tRNA, leading to the formation of s(2)U34. This is tRNA-specific 2-thiouridylase MnmA from Dichelobacter nodosus (strain VCS1703A).